Consider the following 177-residue polypeptide: DELTA-stichotoxin-Hmg2b (177 aa).

The segment at 3-12 is plays an important role in the hemolytic activity; it reads ALAGTIIAGA. Residues 11-30 form an N-terminal region region; the sequence is GASLGFQILDKVLGELGKVS. Phosphocholine-binding residues include Ser54, Val87, Ser105, Pro107, Tyr133, Tyr137, and Tyr138.

It belongs to the actinoporin family. Sea anemone subfamily. Octamer or nonamer in membranes. Monomer in the soluble state.

It localises to the secreted. It is found in the nematocyst. Its subcellular location is the target cell membrane. Pore-forming protein that forms cations-selective hydrophilic pores of around 1 nm and causes cytolysis. Pore formation is a multi-step process that involves specific recognition of membrane sphingomyelin (but neither cholesterol nor phosphatidylcholine) using aromatic rich region and adjacent phosphocholine (POC) binding site, firm binding to the membrane (mainly driven by hydrophobic interactions) accompanied by the transfer of the N-terminal region to the lipid-water interface and finally pore formation after oligomerization of monomers This toxin shows hemolytic activity. This is DELTA-stichotoxin-Hmg2b from Heteractis magnifica (Magnificent sea anemone).